The chain runs to 208 residues: MNNFLQQINSYIKEAFNAGKYLYNGLSVTFDHLRRRPVTVQYPYEKLIPSERYRGRIHYEFDKCIACEVCVRVCPINLPVVDWVMNKETKKKELRNYSIDFGVCIFCGNCVEYCPTNCLSMTEEYELATFDRHNLNFDNVALGRLPTNVTTDPSVKPLRELAYLPKGVMDPHEIPASDTRVGKLPEEVYDWMRPEPNENKDKVSNQIN.

4Fe-4S ferredoxin-type domains follow at residues 55–84 and 95–124; these read GRIH…VDWV and RNYS…MTEE. Cysteine 64, cysteine 67, cysteine 70, cysteine 74, cysteine 104, cysteine 107, cysteine 110, and cysteine 114 together coordinate [4Fe-4S] cluster.

The protein belongs to the complex I 23 kDa subunit family. NDH-1 is composed of at least 11 different subunits. Requires [4Fe-4S] cluster as cofactor.

Its subcellular location is the cellular thylakoid membrane. It carries out the reaction a plastoquinone + NADH + (n+1) H(+)(in) = a plastoquinol + NAD(+) + n H(+)(out). The enzyme catalyses a plastoquinone + NADPH + (n+1) H(+)(in) = a plastoquinol + NADP(+) + n H(+)(out). Functionally, NDH-1 shuttles electrons from an unknown electron donor, via FMN and iron-sulfur (Fe-S) centers, to quinones in the respiratory and/or the photosynthetic chain. The immediate electron acceptor for the enzyme in this species is believed to be plastoquinone. Couples the redox reaction to proton translocation, and thus conserves the redox energy in a proton gradient. This chain is NAD(P)H-quinone oxidoreductase subunit I, found in Prochlorococcus marinus (strain MIT 9215).